The sequence spans 157 residues: 6,7-dimethyl-8-ribityllumazine synthase (157 aa).

Residues Phe-26, 60 to 62, and 86 to 88 each bind 5-amino-6-(D-ribitylamino)uracil; these read ALE and AVI. A (2S)-2-hydroxy-3-oxobutyl phosphate-binding site is contributed by 91 to 92; the sequence is ET. His-94 (proton donor) is an active-site residue. A 5-amino-6-(D-ribitylamino)uracil-binding site is contributed by Asn-119. Residue Arg-133 coordinates (2S)-2-hydroxy-3-oxobutyl phosphate.

It belongs to the DMRL synthase family.

The catalysed reaction is (2S)-2-hydroxy-3-oxobutyl phosphate + 5-amino-6-(D-ribitylamino)uracil = 6,7-dimethyl-8-(1-D-ribityl)lumazine + phosphate + 2 H2O + H(+). It participates in cofactor biosynthesis; riboflavin biosynthesis; riboflavin from 2-hydroxy-3-oxobutyl phosphate and 5-amino-6-(D-ribitylamino)uracil: step 1/2. Its function is as follows. Catalyzes the formation of 6,7-dimethyl-8-ribityllumazine by condensation of 5-amino-6-(D-ribitylamino)uracil with 3,4-dihydroxy-2-butanone 4-phosphate. This is the penultimate step in the biosynthesis of riboflavin. The protein is 6,7-dimethyl-8-ribityllumazine synthase of Laribacter hongkongensis (strain HLHK9).